The chain runs to 253 residues: UPF0246 protein Swit_4565 (253 aa).

It belongs to the UPF0246 family.

The polypeptide is UPF0246 protein Swit_4565 (Rhizorhabdus wittichii (strain DSM 6014 / CCUG 31198 / JCM 15750 / NBRC 105917 / EY 4224 / RW1) (Sphingomonas wittichii)).